We begin with the raw amino-acid sequence, 231 residues long: Protein PIMREG (231 aa).

Residues 1–44 are disordered; that stretch reads MASQWQGMRTSVRRRSLLKEEQLEKKEVTRSAGGHPETGPLGSL. Ser-11 and Ser-16 each carry phosphoserine. Short sequence motifs (D-box) lie at residues 14 to 17 and 53 to 56; these read RRSL and PLRA. Positions 17–29 are enriched in basic and acidic residues; that stretch reads LLKEEQLEKKEVT. Phosphoserine is present on Ser-72. 2 disordered regions span residues 115-138 and 152-197; these read KVRRKRGAQKDRGSPPPSLSQKNT and HLRL…DLEP. Position 128 is a phosphoserine; by Uhmk1; in vitro (Ser-128). Residues 178 to 190 are compositionally biased toward polar residues; the sequence is PCSSTEPLCSPSE. Ser-191 and Ser-193 each carry phosphoserine.

Interacts with PICALM; this interaction may target PICALM to the nucleus. During mitosis, associates with HDAC2 and MTA2 subunits of the chromatin-remodeling NuRD complex; this association is strongest at prometaphase and decreases as the cell progresses through metaphase and anaphase. In terms of processing, ubiquitinated by the anaphase-promoting complex/cyclosome (APC/C) complex in the presence of FZR1, leading to its degradation by the proteasome during mitotic exit. However, degradation is not essential for normal mitotic progression within a single cell cycle. Mainly expressed in thymus and ovary. Expressed in all T-cell subpopulations isolated from the thymus, macrophages, pro-erythrocytes, granulocytes, mast cells and progenitor cells.

The protein resides in the nucleus. Its subcellular location is the nucleolus. In terms of biological role, during mitosis, may play a role in the metaphase-to-anaphase transition. This chain is Protein PIMREG, found in Mus musculus (Mouse).